The following is a 294-amino-acid chain: N-acetylmuramic acid 6-phosphate etherase (294 aa).

In terms of domain architecture, SIS spans 54-217 (VIKSFEEEGR…STASMIGVGK (164 aa)). The active-site Proton donor is the Glu-82. Residue Glu-113 is part of the active site.

Belongs to the GCKR-like family. MurNAc-6-P etherase subfamily. As to quaternary structure, homodimer.

The catalysed reaction is N-acetyl-D-muramate 6-phosphate + H2O = N-acetyl-D-glucosamine 6-phosphate + (R)-lactate. Its pathway is amino-sugar metabolism; N-acetylmuramate degradation. Specifically catalyzes the cleavage of the D-lactyl ether substituent of MurNAc 6-phosphate, producing GlcNAc 6-phosphate and D-lactate. This is N-acetylmuramic acid 6-phosphate etherase from Bacillus cereus (strain AH187).